Consider the following 33-residue polypeptide: Pardaxin P-3 (33 aa).

Belongs to the pardaxin family. In terms of assembly, in aqueous solution exists as a tetramer.

Its subcellular location is the secreted. It localises to the target cell membrane. Exhibits unusual shark repellent and surfactant properties. Forms voltage-dependent, ion-permeable channels in membranes. At high concentration causes cell membrane lysis. The sequence is that of Pardaxin P-3 from Pardachirus pavoninus (Peacock sole).